We begin with the raw amino-acid sequence, 168 residues long: Endoribonuclease YbeY (168 aa).

Zn(2+)-binding residues include His123, His127, and His133.

The protein belongs to the endoribonuclease YbeY family. Zn(2+) serves as cofactor.

The protein localises to the cytoplasm. Its function is as follows. Single strand-specific metallo-endoribonuclease involved in late-stage 70S ribosome quality control and in maturation of the 3' terminus of the 16S rRNA. The polypeptide is Endoribonuclease YbeY (Francisella tularensis subsp. tularensis (strain SCHU S4 / Schu 4)).